Here is a 422-residue protein sequence, read N- to C-terminus: Serine--tRNA ligase (422 aa).

Position 229 to 231 (229 to 231 (TAE)) interacts with L-serine. Residue 260–262 (RRE) participates in ATP binding. E283 provides a ligand contact to L-serine. 347–350 (EISS) is an ATP binding site. S383 is an L-serine binding site.

This sequence belongs to the class-II aminoacyl-tRNA synthetase family. Type-1 seryl-tRNA synthetase subfamily. As to quaternary structure, homodimer. The tRNA molecule binds across the dimer.

It localises to the cytoplasm. The enzyme catalyses tRNA(Ser) + L-serine + ATP = L-seryl-tRNA(Ser) + AMP + diphosphate + H(+). The catalysed reaction is tRNA(Sec) + L-serine + ATP = L-seryl-tRNA(Sec) + AMP + diphosphate + H(+). Its pathway is aminoacyl-tRNA biosynthesis; selenocysteinyl-tRNA(Sec) biosynthesis; L-seryl-tRNA(Sec) from L-serine and tRNA(Sec): step 1/1. Its function is as follows. Catalyzes the attachment of serine to tRNA(Ser). Is also able to aminoacylate tRNA(Sec) with serine, to form the misacylated tRNA L-seryl-tRNA(Sec), which will be further converted into selenocysteinyl-tRNA(Sec). The chain is Serine--tRNA ligase from Pelobacter propionicus (strain DSM 2379 / NBRC 103807 / OttBd1).